Reading from the N-terminus, the 247-residue chain is Trypsin (247 aa).

Positions 1-21 are cleaved as a signal peptide; that stretch reads LTTVISYFALVAFALVGVSYA. Positions 22-30 are cleaved as a propeptide — activation peptide; the sequence is TPKASINGR. The region spanning 31–247 is the Peptidase S1 domain; sequence IVGGEMTDIS…QSNFPGVYGI (217 aa). A disulfide bridge links cysteine 61 with cysteine 77. Active-site charge relay system residues include histidine 76 and aspartate 120. 2 disulfides stabilise this stretch: cysteine 185-cysteine 201 and cysteine 212-cysteine 236. The active-site Charge relay system is serine 216.

It belongs to the peptidase S1 family. As to expression, midgut.

It localises to the secreted. The protein resides in the extracellular space. It carries out the reaction Preferential cleavage: Arg-|-Xaa, Lys-|-Xaa.. This Simulium vittatum (Striped black fly) protein is Trypsin.